The sequence spans 430 residues: Glutamate-1-semialdehyde 2,1-aminomutase (430 aa).

Lys-266 carries the N6-(pyridoxal phosphate)lysine modification.

The protein belongs to the class-III pyridoxal-phosphate-dependent aminotransferase family. HemL subfamily. In terms of assembly, homodimer. It depends on pyridoxal 5'-phosphate as a cofactor.

It is found in the cytoplasm. The catalysed reaction is (S)-4-amino-5-oxopentanoate = 5-aminolevulinate. It participates in porphyrin-containing compound metabolism; protoporphyrin-IX biosynthesis; 5-aminolevulinate from L-glutamyl-tRNA(Glu): step 2/2. This is Glutamate-1-semialdehyde 2,1-aminomutase from Acidithiobacillus ferrooxidans (strain ATCC 23270 / DSM 14882 / CIP 104768 / NCIMB 8455) (Ferrobacillus ferrooxidans (strain ATCC 23270)).